Reading from the N-terminus, the 333-residue chain is UPF0324 membrane protein WS2204 (333 aa).

The next 9 helical transmembrane spans lie at 4-26 (SIRPFVLGIALCTLIGIVAFGLA), 31-53 (FLSLHLSPLILSVLVGMALAPWY), 59-81 (IGIIGVLWCGKRLLRLGIVLFGF), 88-110 (LLGVGVEGFLIALLVVAGIFTLG), 125-147 (SMLIACGSAVCGAAAILALESLS), 154-176 (TAIAVGVVVLFGLLSMFLYPLVY), 218-240 (VIVKMIRVILLVPLLLLLSFTIL), 253-275 (PWFALLFLGAILLGSLFFFPSWL), and 310-332 (ALALGAILWGVLLFGGLGLVKLL).

It belongs to the UPF0324 family.

It is found in the cell membrane. The chain is UPF0324 membrane protein WS2204 from Wolinella succinogenes (strain ATCC 29543 / DSM 1740 / CCUG 13145 / JCM 31913 / LMG 7466 / NCTC 11488 / FDC 602W) (Vibrio succinogenes).